The sequence spans 199 residues: NAD(P)H dehydrogenase (quinone) (199 aa).

In terms of domain architecture, Flavodoxin-like spans 4–190 (MLVLYYSAYG…DGARFQGRRV (187 aa)). Residues 10-15 (SAYGHM) and 78-80 (TRY) each bind FMN. Y12 lines the NAD(+) pocket. Residue W98 coordinates substrate. FMN is bound by residues 113 to 119 (STATQYG) and H134. The tract at residues 162–181 (GMTTTADGDGSRQPSAQELD) is disordered. The span at 163–177 (MTTTADGDGSRQPSA) shows a compositional bias: polar residues.

The protein belongs to the WrbA family. Requires FMN as cofactor.

It carries out the reaction a quinone + NADH + H(+) = a quinol + NAD(+). The enzyme catalyses a quinone + NADPH + H(+) = a quinol + NADP(+). This is NAD(P)H dehydrogenase (quinone) from Brucella suis (strain ATCC 23445 / NCTC 10510).